A 454-amino-acid chain; its full sequence is Glutamyl-tRNA(Gln) amidotransferase subunit A (454 aa).

Residues lysine 56 and serine 131 each act as charge relay system in the active site. Serine 155 functions as the Acyl-ester intermediate in the catalytic mechanism.

It belongs to the amidase family. GatA subfamily. As to quaternary structure, heterotrimer of A, B and C subunits.

It carries out the reaction L-glutamyl-tRNA(Gln) + L-glutamine + ATP + H2O = L-glutaminyl-tRNA(Gln) + L-glutamate + ADP + phosphate + H(+). Allows the formation of correctly charged Gln-tRNA(Gln) through the transamidation of misacylated Glu-tRNA(Gln) in organisms which lack glutaminyl-tRNA synthetase. The reaction takes place in the presence of glutamine and ATP through an activated gamma-phospho-Glu-tRNA(Gln). The polypeptide is Glutamyl-tRNA(Gln) amidotransferase subunit A (Campylobacter lari (strain RM2100 / D67 / ATCC BAA-1060)).